Reading from the N-terminus, the 123-residue chain is Ribosome-binding factor A (123 aa).

This sequence belongs to the RbfA family. Monomer. Binds 30S ribosomal subunits, but not 50S ribosomal subunits or 70S ribosomes.

It localises to the cytoplasm. In terms of biological role, one of several proteins that assist in the late maturation steps of the functional core of the 30S ribosomal subunit. Associates with free 30S ribosomal subunits (but not with 30S subunits that are part of 70S ribosomes or polysomes). Required for efficient processing of 16S rRNA. May interact with the 5'-terminal helix region of 16S rRNA. This is Ribosome-binding factor A from Solibacter usitatus (strain Ellin6076).